The following is a 472-amino-acid chain: Aspartyl/glutamyl-tRNA(Asn/Gln) amidotransferase subunit B (472 aa).

It belongs to the GatB/GatE family. GatB subfamily. Heterotrimer of A, B and C subunits.

It catalyses the reaction L-glutamyl-tRNA(Gln) + L-glutamine + ATP + H2O = L-glutaminyl-tRNA(Gln) + L-glutamate + ADP + phosphate + H(+). The enzyme catalyses L-aspartyl-tRNA(Asn) + L-glutamine + ATP + H2O = L-asparaginyl-tRNA(Asn) + L-glutamate + ADP + phosphate + 2 H(+). Allows the formation of correctly charged Asn-tRNA(Asn) or Gln-tRNA(Gln) through the transamidation of misacylated Asp-tRNA(Asn) or Glu-tRNA(Gln) in organisms which lack either or both of asparaginyl-tRNA or glutaminyl-tRNA synthetases. The reaction takes place in the presence of glutamine and ATP through an activated phospho-Asp-tRNA(Asn) or phospho-Glu-tRNA(Gln). In Campylobacter jejuni subsp. jejuni serotype O:23/36 (strain 81-176), this protein is Aspartyl/glutamyl-tRNA(Asn/Gln) amidotransferase subunit B.